Consider the following 209-residue polypeptide: uncharacterized protein (209 aa).

Over residues 1–11 (MMRTNAGKETK) the composition is skewed to basic and acidic residues. The segment at 1–20 (MMRTNAGKETKGYNPAPADS) is disordered.

This is an uncharacterized protein from Caenorhabditis elegans.